Consider the following 524-residue polypeptide: Probable lipid II flippase MurJ (524 aa).

13 helical membrane-spanning segments follow: residues 44-64 (IFGAGMATDAFFVAFKLPNLL), 103-123 (LLTLALAVVTVAGMLAAPWVI), 146-166 (ITFPYILLISLASLVGAILNT), 172-192 (IPAFAPTFLNISMIGFALFAA), 195-215 (FNPPVLALAWAVTVGGVLQLV), 250-270 (ILGVSVSQISLIINTIFASFL), 284-304 (LMEFPSGVLGVALGTILLPSL), 322-342 (WGLRLCFLLALPSAVALGILA), 367-387 (LIAYSVGLIGLIVVKVLAPGF), 396-416 (PVKIAIVTLIMTQLMNLAFIG), 420-440 (HAGLSLSIGLAACLNASLLYW), 456-476 (WFLMRLIISVLVMAAVLFGVL), and 494-514 (LMAVVIAGIAAYFAALAVLGF).

Belongs to the MurJ/MviN family.

The protein resides in the cell inner membrane. Its pathway is cell wall biogenesis; peptidoglycan biosynthesis. In terms of biological role, involved in peptidoglycan biosynthesis. Transports lipid-linked peptidoglycan precursors from the inner to the outer leaflet of the cytoplasmic membrane. This Salmonella typhimurium (strain LT2 / SGSC1412 / ATCC 700720) protein is Probable lipid II flippase MurJ.